The chain runs to 254 residues: 5'/3'-nucleotidase SurE (254 aa).

A divalent metal cation is bound by residues D9, D10, S40, and N93.

This sequence belongs to the SurE nucleotidase family. The cofactor is a divalent metal cation.

The protein resides in the cytoplasm. It catalyses the reaction a ribonucleoside 5'-phosphate + H2O = a ribonucleoside + phosphate. The enzyme catalyses a ribonucleoside 3'-phosphate + H2O = a ribonucleoside + phosphate. The catalysed reaction is [phosphate](n) + H2O = [phosphate](n-1) + phosphate + H(+). Nucleotidase with a broad substrate specificity as it can dephosphorylate various ribo- and deoxyribonucleoside 5'-monophosphates and ribonucleoside 3'-monophosphates with highest affinity to 3'-AMP. Also hydrolyzes polyphosphate (exopolyphosphatase activity) with the preference for short-chain-length substrates (P20-25). Might be involved in the regulation of dNTP and NTP pools, and in the turnover of 3'-mononucleotides produced by numerous intracellular RNases (T1, T2, and F) during the degradation of various RNAs. The polypeptide is 5'/3'-nucleotidase SurE (Photorhabdus laumondii subsp. laumondii (strain DSM 15139 / CIP 105565 / TT01) (Photorhabdus luminescens subsp. laumondii)).